The chain runs to 347 residues: WAT1-related protein At4g15540 (347 aa).

10 helical membrane-spanning segments follow: residues 15-35, 47-67, 73-93, 108-128, 139-159, 178-198, 210-230, 243-263, 276-296, and 299-319; these read VVPFTAMIAIECTTVGSSILY, VFVFYAYVGATLVLLLLSLIF, LPTAKSSLFFKIFLLALLGLT, TLSSAISNLTPAFTFILAIFF, ATQAKIIGTIVSISGALVIVL, WIIGGLLLGLQFLLLSVWFIL, IAVVFCYNLCATLISGTVCLL, GFSLASVIYSGLFDTSLGSVI, ISLFKPLSIAIAVAMAAIFLG, and LHLGSVIGSVILSFGFYTVIW. Residues 30–158 enclose the EamA 1 domain; it reads GSSILYKAAT…VSISGALVIV (129 aa). The 102-residue stretch at 216–317 folds into the EamA 2 domain; it reads YNLCATLISG…VILSFGFYTV (102 aa).

Belongs to the drug/metabolite transporter (DMT) superfamily. Plant drug/metabolite exporter (P-DME) (TC 2.A.7.4) family.

Its subcellular location is the membrane. This Arabidopsis thaliana (Mouse-ear cress) protein is WAT1-related protein At4g15540.